The following is a 291-amino-acid chain: Small ribosomal subunit biogenesis GTPase RsgA 2 (291 aa).

The CP-type G domain occupies 63–221; that stretch reads ENALVRPPVA…VADTPGFSSI (159 aa). Residues 112-115 and 164-172 each bind GTP; these read SKMD and GQSGVGKST. Zn(2+) contacts are provided by cysteine 245, cysteine 250, histidine 252, and cysteine 258.

This sequence belongs to the TRAFAC class YlqF/YawG GTPase family. RsgA subfamily. As to quaternary structure, monomer. Associates with 30S ribosomal subunit, binds 16S rRNA. The cofactor is Zn(2+).

The protein localises to the cytoplasm. One of several proteins that assist in the late maturation steps of the functional core of the 30S ribosomal subunit. Helps release RbfA from mature subunits. May play a role in the assembly of ribosomal proteins into the subunit. Circularly permuted GTPase that catalyzes slow GTP hydrolysis, GTPase activity is stimulated by the 30S ribosomal subunit. The polypeptide is Small ribosomal subunit biogenesis GTPase RsgA 2 (Listeria innocua serovar 6a (strain ATCC BAA-680 / CLIP 11262)).